Reading from the N-terminus, the 316-residue chain is C1GALT1-specific chaperone 1 (316 aa).

Topologically, residues 1–6 (MLSESS) are cytoplasmic. Residues 7-26 (SFLKGVMLGSIFCALITMLG) traverse the membrane as a helical; Signal-anchor for type II membrane protein segment. At 27–316 (HIRIGNRMHH…FLPPNGSEND (290 aa)) the chain is on the lumenal side.

The protein belongs to the glycosyltransferase 31 family. Beta3-Gal-T subfamily. In terms of assembly, associates with core 1 beta-3-galactosyltransferase (C1GALT1), probably not with the soluble active form.

It localises to the membrane. Functionally, probable chaperone required for the generation of 1 O-glycan Gal-beta1-3GalNAc-alpha1-Ser/Thr (T antigen), which is a precursor for many extended O-glycans in glycoproteins. Probably acts as a specific molecular chaperone assisting the folding/stability of core 1 beta-3-galactosyltransferase (C1GALT1). This is C1GALT1-specific chaperone 1 (C1galt1c1) from Rattus norvegicus (Rat).